The chain runs to 332 residues: Glycerol-3-phosphate dehydrogenase [NAD(P)+] (332 aa).

The NADPH site is built by Trp13, Lys34, and Lys108. 3 residues coordinate sn-glycerol 3-phosphate: Lys108, Gly136, and Ser138. Ala140 contributes to the NADPH binding site. Sn-glycerol 3-phosphate-binding residues include Lys191, Asp244, Ser254, Arg255, and Asn256. The Proton acceptor role is filled by Lys191. Arg255 provides a ligand contact to NADPH. The NADPH site is built by Val279 and Glu281.

It belongs to the NAD-dependent glycerol-3-phosphate dehydrogenase family.

Its subcellular location is the cytoplasm. The catalysed reaction is sn-glycerol 3-phosphate + NAD(+) = dihydroxyacetone phosphate + NADH + H(+). The enzyme catalyses sn-glycerol 3-phosphate + NADP(+) = dihydroxyacetone phosphate + NADPH + H(+). It functions in the pathway membrane lipid metabolism; glycerophospholipid metabolism. Functionally, catalyzes the reduction of the glycolytic intermediate dihydroxyacetone phosphate (DHAP) to sn-glycerol 3-phosphate (G3P), the key precursor for phospholipid synthesis. This chain is Glycerol-3-phosphate dehydrogenase [NAD(P)+], found in Francisella tularensis subsp. novicida (strain U112).